The following is a 397-amino-acid chain: Tryptophan synthase beta chain (397 aa).

Lys-91 bears the N6-(pyridoxal phosphate)lysine mark.

Belongs to the TrpB family. In terms of assembly, tetramer of two alpha and two beta chains. Requires pyridoxal 5'-phosphate as cofactor.

It catalyses the reaction (1S,2R)-1-C-(indol-3-yl)glycerol 3-phosphate + L-serine = D-glyceraldehyde 3-phosphate + L-tryptophan + H2O. It participates in amino-acid biosynthesis; L-tryptophan biosynthesis; L-tryptophan from chorismate: step 5/5. Its function is as follows. The beta subunit is responsible for the synthesis of L-tryptophan from indole and L-serine. This Bacillus cereus (strain G9842) protein is Tryptophan synthase beta chain.